A 494-amino-acid chain; its full sequence is Glutamyl-tRNA reductase (494 aa).

Residues 58-61 (TCNR), serine 118, 123-125 (EQQ), and glutamine 129 contribute to the substrate site. Cysteine 59 serves as the catalytic Nucleophile. 205–210 (GAGAMA) serves as a coordination point for NADP(+). The tract at residues 448–494 (KGANAGSGQRKKQKPQENRVSTARAVYRSTYQDLTQASTPGGKDDDQ) is disordered. Polar residues predominate over residues 476–486 (STYQDLTQAST).

This sequence belongs to the glutamyl-tRNA reductase family. As to quaternary structure, homodimer.

The enzyme catalyses (S)-4-amino-5-oxopentanoate + tRNA(Glu) + NADP(+) = L-glutamyl-tRNA(Glu) + NADPH + H(+). Its pathway is porphyrin-containing compound metabolism; protoporphyrin-IX biosynthesis; 5-aminolevulinate from L-glutamyl-tRNA(Glu): step 1/2. In terms of biological role, catalyzes the NADPH-dependent reduction of glutamyl-tRNA(Glu) to glutamate 1-semialdehyde (GSA). The protein is Glutamyl-tRNA reductase of Corynebacterium urealyticum (strain ATCC 43042 / DSM 7109).